Reading from the N-terminus, the 166-residue chain is NADPH-dependent 7-cyano-7-deazaguanine reductase (166 aa).

The active-site Thioimide intermediate is Cys-57. Catalysis depends on Asp-64, which acts as the Proton donor. Substrate-binding positions include 79–81 (VES) and 98–99 (HE).

Belongs to the GTP cyclohydrolase I family. QueF type 1 subfamily.

It is found in the cytoplasm. The catalysed reaction is 7-aminomethyl-7-carbaguanine + 2 NADP(+) = 7-cyano-7-deazaguanine + 2 NADPH + 3 H(+). It functions in the pathway tRNA modification; tRNA-queuosine biosynthesis. Its function is as follows. Catalyzes the NADPH-dependent reduction of 7-cyano-7-deazaguanine (preQ0) to 7-aminomethyl-7-deazaguanine (preQ1). In Staphylococcus epidermidis (strain ATCC 35984 / DSM 28319 / BCRC 17069 / CCUG 31568 / BM 3577 / RP62A), this protein is NADPH-dependent 7-cyano-7-deazaguanine reductase.